The following is a 119-amino-acid chain: V-type proton ATPase subunit F (119 aa).

Belongs to the V-ATPase F subunit family. In terms of assembly, V-ATPase is a heteromultimeric enzyme made up of two complexes: the ATP-hydrolytic V1 complex and the proton translocation V0 complex. The V1 complex consists of three catalytic AB heterodimers that form a heterohexamer, three peripheral stalks each consisting of EG heterodimers, one central rotor including subunits D and F, and the regulatory subunits C and H. The proton translocation complex V0 consists of the proton transport subunit a, a ring of proteolipid subunits c9c'', rotary subunit d, subunits e and f, and the accessory subunits ATP6AP1/Ac45 and ATP6AP2/PRR.

It localises to the cytoplasmic vesicle. Its subcellular location is the secretory vesicle. The protein localises to the synaptic vesicle membrane. It is found in the clathrin-coated vesicle membrane. Subunit of the V1 complex of vacuolar(H+)-ATPase (V-ATPase), a multisubunit enzyme composed of a peripheral complex (V1) that hydrolyzes ATP and a membrane integral complex (V0) that translocates protons. V-ATPase is responsible for acidifying and maintaining the pH of intracellular compartments and in some cell types, is targeted to the plasma membrane, where it is responsible for acidifying the extracellular environment. The chain is V-type proton ATPase subunit F (ATP6V1F) from Homo sapiens (Human).